Here is a 245-residue protein sequence, read N- to C-terminus: Adenosylcobinamide-GDP ribazoletransferase (245 aa).

A run of 6 helical transmembrane segments spans residues 35–55 (WFPL…ALGL), 108–128 (IGAF…IGAH), 137–157 (GVLI…AALV), 176–196 (IAIG…TPVM), 197–217 (TTVT…HLAR), and 222–242 (INGD…LLAA).

It belongs to the CobS family. The cofactor is Mg(2+).

The protein resides in the cell inner membrane. It carries out the reaction alpha-ribazole + adenosylcob(III)inamide-GDP = adenosylcob(III)alamin + GMP + H(+). The enzyme catalyses alpha-ribazole 5'-phosphate + adenosylcob(III)inamide-GDP = adenosylcob(III)alamin 5'-phosphate + GMP + H(+). It functions in the pathway cofactor biosynthesis; adenosylcobalamin biosynthesis; adenosylcobalamin from cob(II)yrinate a,c-diamide: step 7/7. Joins adenosylcobinamide-GDP and alpha-ribazole to generate adenosylcobalamin (Ado-cobalamin). Also synthesizes adenosylcobalamin 5'-phosphate from adenosylcobinamide-GDP and alpha-ribazole 5'-phosphate. The protein is Adenosylcobinamide-GDP ribazoletransferase of Nitratidesulfovibrio vulgaris (strain DP4) (Desulfovibrio vulgaris).